A 151-amino-acid chain; its full sequence is D-ribose pyranase 1 (151 aa).

His-20 functions as the Proton donor in the catalytic mechanism. Residues Asp-28, His-98, and 121-123 (WGN) each bind substrate.

This sequence belongs to the RbsD / FucU family. RbsD subfamily. As to quaternary structure, homodecamer.

It localises to the cytoplasm. The catalysed reaction is beta-D-ribopyranose = beta-D-ribofuranose. Its pathway is carbohydrate metabolism; D-ribose degradation; D-ribose 5-phosphate from beta-D-ribopyranose: step 1/2. Functionally, catalyzes the interconversion of beta-pyran and beta-furan forms of D-ribose. The sequence is that of D-ribose pyranase 1 from Streptomyces griseus subsp. griseus (strain JCM 4626 / CBS 651.72 / NBRC 13350 / KCC S-0626 / ISP 5235).